The primary structure comprises 61 residues: MTVYAVTGGAEFLGRYIVKLLISADDVQEIRVINVVEDPQPLVSKVKVINYIQCDINDLIR.

Belongs to the 3-beta-HSD family.

The chain is Truncated 3-beta hydroxy-5-ene steroid dehydrogenase homolog from Variola virus (isolate Human/India/Ind3/1967) (VARV).